Reading from the N-terminus, the 469-residue chain is Argininosuccinate lyase (469 aa).

Belongs to the lyase 1 family. Argininosuccinate lyase subfamily.

It localises to the cytoplasm. It catalyses the reaction 2-(N(omega)-L-arginino)succinate = fumarate + L-arginine. The protein operates within amino-acid biosynthesis; L-arginine biosynthesis; L-arginine from L-ornithine and carbamoyl phosphate: step 3/3. This Burkholderia cenocepacia (strain ATCC BAA-245 / DSM 16553 / LMG 16656 / NCTC 13227 / J2315 / CF5610) (Burkholderia cepacia (strain J2315)) protein is Argininosuccinate lyase.